The sequence spans 892 residues: Alanine--tRNA ligase (892 aa).

Positions 565, 569, 675, and 679 each coordinate Zn(2+). The disordered stretch occupies residues 852–871; it reads MGGKGGGGRPDMAQAGGPEA.

It belongs to the class-II aminoacyl-tRNA synthetase family. Zn(2+) is required as a cofactor.

The protein localises to the cytoplasm. The catalysed reaction is tRNA(Ala) + L-alanine + ATP = L-alanyl-tRNA(Ala) + AMP + diphosphate. Catalyzes the attachment of alanine to tRNA(Ala) in a two-step reaction: alanine is first activated by ATP to form Ala-AMP and then transferred to the acceptor end of tRNA(Ala). Also edits incorrectly charged Ser-tRNA(Ala) and Gly-tRNA(Ala) via its editing domain. The polypeptide is Alanine--tRNA ligase (Parvibaculum lavamentivorans (strain DS-1 / DSM 13023 / NCIMB 13966)).